The chain runs to 133 residues: Beta-synuclein (133 aa).

2 consecutive repeat copies span residues 20–30 and 31–41. The 4 X 11 AA tandem repeats of [EGS]-K-T-K-[EQ]-[GQ]-V-X(4) stretch occupies residues 20-66; that stretch reads EKTKQGVTEAAEKTKEGVLYVGSKTSGVVQGVASVAEKTKEQASHLG. The 3; approximate repeat unit spans residues 42–55; the sequence is SKTSGVVQGVASVA. Ser-45 carries the post-translational modification Phosphoserine. Residues 56-66 form repeat 4; sequence EKTKEQASHLG. Positions 96 to 133 are disordered; sequence EVAQEAAEEPLIEPLMEPEGESYEDSPQEEYQEYEPEA. Residues 97 to 133 show a composition bias toward acidic residues; it reads VAQEAAEEPLIEPLMEPEGESYEDSPQEEYQEYEPEA. Phosphoserine; by BARK1, CK2 and GRK5 is present on Ser-117.

Belongs to the synuclein family. In terms of processing, phosphorylated. Phosphorylation by G-protein coupled receptor kinases (GRK) is more efficient than phosphorylation by CK1, CK2 and CaM-kinase II. Highly expressed in the brain.

The protein localises to the cytoplasm. May be involved in neuronal plasticity. In Mus musculus (Mouse), this protein is Beta-synuclein (Sncb).